We begin with the raw amino-acid sequence, 102 residues long: Exocrine gland-secreted peptide 1 (102 aa).

An N-terminal signal peptide occupies residues 1–22; that stretch reads MTSLPVLLFLIILLLPSMITEG. A disulfide bridge links C63 with C95.

Belongs to the exocrine gland-secreted peptide family. In terms of assembly, monomer. As to expression, expressed in the extraorbital lacrimal gland from where it is secreted into tears.

It is found in the secreted. Its function is as follows. Male-specific phermone which is recognized by the Vmn2r116/V2rp5 receptor in the vomeronasal organ (VNO) and enhances female sexual receptive behavior (lordosis) upon male mounting, resulting in successful copulation. This is Exocrine gland-secreted peptide 1 from Mus musculus (Mouse).